The following is a 430-amino-acid chain: Dihydroorotase (430 aa).

2 residues coordinate Zn(2+): histidine 57 and histidine 59. Substrate is bound by residues 59-61 and asparagine 91; that span reads HLR. The Zn(2+) site is built by aspartate 151, histidine 178, and histidine 231. Asparagine 277 is a substrate binding site. Residue aspartate 304 participates in Zn(2+) binding. The active site involves aspartate 304. Residues histidine 308 and 322-323 contribute to the substrate site; that span reads PG.

It belongs to the metallo-dependent hydrolases superfamily. DHOase family. Class I DHOase subfamily. Requires Zn(2+) as cofactor.

It catalyses the reaction (S)-dihydroorotate + H2O = N-carbamoyl-L-aspartate + H(+). Its pathway is pyrimidine metabolism; UMP biosynthesis via de novo pathway; (S)-dihydroorotate from bicarbonate: step 3/3. Catalyzes the reversible cyclization of carbamoyl aspartate to dihydroorotate. The chain is Dihydroorotase from Mycobacterium tuberculosis (strain ATCC 25618 / H37Rv).